The chain runs to 326 residues: Probable cell division protein WhiA (326 aa).

Positions 275–308 (SLEELGQLSDPPLTKDAVAGRIRRLLAMADKKAS) form a DNA-binding region, H-T-H motif.

The protein belongs to the WhiA family.

In terms of biological role, involved in cell division and chromosome segregation. The polypeptide is Probable cell division protein WhiA (Beutenbergia cavernae (strain ATCC BAA-8 / DSM 12333 / CCUG 43141 / JCM 11478 / NBRC 16432 / NCIMB 13614 / HKI 0122)).